A 25-amino-acid chain; its full sequence is Germin-like protein (25 aa).

This sequence belongs to the germin family.

This Populus euphratica (Euphrates poplar) protein is Germin-like protein.